The chain runs to 117 residues: Crustacean hyperglycemic hormones 3 (117 aa).

Residues 1–24 (MVTPRMLSALSAVLLLVLTASSSA) form the signal peptide. 3 disulfide bridges follow: Cys50-Cys86, Cys66-Cys82, and Cys69-Cys95. Position 115 is a valine amide (Val115).

The protein belongs to the arthropod CHH/MIH/GIH/VIH hormone family. Produced by the medulla terminalis X-organ in the eyestalks and transported to the sinus gland where they are stored and released.

It is found in the secreted. Functionally, hormone found in the sinus gland of isopods and decapods which controls the blood sugar level. Has a secretagogue action over the amylase released from the midgut gland. May act as a stress hormone and may be involved in the control of molting and reproduction. This is Crustacean hyperglycemic hormones 3 from Penaeus japonicus (Kuruma prawn).